The sequence spans 64 residues: Large ribosomal subunit protein uL30 (64 aa).

Belongs to the universal ribosomal protein uL30 family. As to quaternary structure, part of the 50S ribosomal subunit.

The protein is Large ribosomal subunit protein uL30 of Bradyrhizobium diazoefficiens (strain JCM 10833 / BCRC 13528 / IAM 13628 / NBRC 14792 / USDA 110).